We begin with the raw amino-acid sequence, 1375 residues long: ARF guanine-nucleotide exchange factor GNL2 (1375 aa).

In terms of domain architecture, SEC7 spans 486–676; sequence HIRVRKAQKR…SELFQSIATN (191 aa). Residue Glu590 is part of the active site.

In terms of assembly, homodimer. Preferentially expressed in mature pollen grains and growing pollen tubes.

The protein localises to the cytoplasm. It localises to the cytosol. Its subcellular location is the membrane. Its function is as follows. Activates the ARF proteins by exchanging bound GDP for free GTP. Plays a role in vesicular protein sorting. Essential for pollen germination. This is ARF guanine-nucleotide exchange factor GNL2 (GNL2) from Arabidopsis thaliana (Mouse-ear cress).